A 219-amino-acid polypeptide reads, in one-letter code: Proteasome subunit beta (219 aa).

A propeptide spans 1-14 (MISNSEYHKEYMKG) (removed in mature form; by autocatalysis). Thr15 functions as the Nucleophile in the catalytic mechanism.

Belongs to the peptidase T1B family. The 20S proteasome core is composed of 14 alpha and 14 beta subunits that assemble into four stacked heptameric rings, resulting in a barrel-shaped structure. The two inner rings, each composed of seven catalytic beta subunits, are sandwiched by two outer rings, each composed of seven alpha subunits. The catalytic chamber with the active sites is on the inside of the barrel. Has a gated structure, the ends of the cylinder being occluded by the N-termini of the alpha-subunits. Is capped at one or both ends by the proteasome regulatory ATPase, PAN.

It localises to the cytoplasm. It carries out the reaction Cleavage of peptide bonds with very broad specificity.. The formation of the proteasomal ATPase PAN-20S proteasome complex, via the docking of the C-termini of PAN into the intersubunit pockets in the alpha-rings, triggers opening of the gate for substrate entry. Interconversion between the open-gate and close-gate conformations leads to a dynamic regulation of the 20S proteasome proteolysis activity. Its function is as follows. Component of the proteasome core, a large protease complex with broad specificity involved in protein degradation. In Methanococcus maripaludis (strain C6 / ATCC BAA-1332), this protein is Proteasome subunit beta.